We begin with the raw amino-acid sequence, 89 residues long: Small ribosomal subunit protein uS14A (89 aa).

Belongs to the universal ribosomal protein uS14 family. As to quaternary structure, part of the 30S ribosomal subunit. Contacts proteins S3 and S10.

In terms of biological role, binds 16S rRNA, required for the assembly of 30S particles and may also be responsible for determining the conformation of the 16S rRNA at the A site. The sequence is that of Small ribosomal subunit protein uS14A from Lacticaseibacillus paracasei (strain ATCC 334 / BCRC 17002 / CCUG 31169 / CIP 107868 / KCTC 3260 / NRRL B-441) (Lactobacillus paracasei).